The following is a 505-amino-acid chain: Trans-cinnamate 4-monooxygenase (505 aa).

A helical transmembrane segment spans residues 3–23; the sequence is LLLLEKTLLGSFVAILVAILV. (E)-cinnamate contacts are provided by residues 213 to 218 and alanine 306; that span reads RSRLAQ. Cysteine 447 contacts heme.

This sequence belongs to the cytochrome P450 family. Heme serves as cofactor.

It is found in the membrane. It catalyses the reaction (E)-cinnamate + reduced [NADPH--hemoprotein reductase] + O2 = (E)-4-coumarate + oxidized [NADPH--hemoprotein reductase] + H2O + H(+). Its pathway is phenylpropanoid metabolism; trans-4-coumarate biosynthesis; trans-4-coumarate from trans-cinnamate: step 1/1. Catalyzes the first oxidative step of the phenylpropanoid pathway in higher plants by transforming trans-cinnamate into p-coumarate. The compounds formed by this pathway are essential components for lignification, pollination, and defense against ultraviolet light, predators and pathogens. The protein is Trans-cinnamate 4-monooxygenase (CYP73A13) of Populus tremuloides (Quaking aspen).